The following is a 145-amino-acid chain: D-aminoacyl-tRNA deacylase (145 aa).

A Gly-cisPro motif, important for rejection of L-amino acids motif is present at residues 137–138 (GP).

This sequence belongs to the DTD family. Homodimer.

It localises to the cytoplasm. It catalyses the reaction glycyl-tRNA(Ala) + H2O = tRNA(Ala) + glycine + H(+). The catalysed reaction is a D-aminoacyl-tRNA + H2O = a tRNA + a D-alpha-amino acid + H(+). Functionally, an aminoacyl-tRNA editing enzyme that deacylates mischarged D-aminoacyl-tRNAs. Also deacylates mischarged glycyl-tRNA(Ala), protecting cells against glycine mischarging by AlaRS. Acts via tRNA-based rather than protein-based catalysis; rejects L-amino acids rather than detecting D-amino acids in the active site. By recycling D-aminoacyl-tRNA to D-amino acids and free tRNA molecules, this enzyme counteracts the toxicity associated with the formation of D-aminoacyl-tRNA entities in vivo and helps enforce protein L-homochirality. In Shewanella putrefaciens (strain CN-32 / ATCC BAA-453), this protein is D-aminoacyl-tRNA deacylase.